A 662-amino-acid chain; its full sequence is DNA ligase (662 aa).

NAD(+) contacts are provided by residues 31–35 (DYEYD), 80–81 (SL), and E109. Catalysis depends on K111, which acts as the N6-AMP-lysine intermediate. Residues R132, E166, K282, and K306 each contribute to the NAD(+) site. Zn(2+) contacts are provided by C400, C403, C418, and C423. In terms of domain architecture, BRCT spans 581–662 (KVSNIFEGKT…FEEMLKGENI (82 aa)).

It belongs to the NAD-dependent DNA ligase family. LigA subfamily. Requires Mg(2+) as cofactor. Mn(2+) is required as a cofactor.

The enzyme catalyses NAD(+) + (deoxyribonucleotide)n-3'-hydroxyl + 5'-phospho-(deoxyribonucleotide)m = (deoxyribonucleotide)n+m + AMP + beta-nicotinamide D-nucleotide.. In terms of biological role, DNA ligase that catalyzes the formation of phosphodiester linkages between 5'-phosphoryl and 3'-hydroxyl groups in double-stranded DNA using NAD as a coenzyme and as the energy source for the reaction. It is essential for DNA replication and repair of damaged DNA. In Thermoanaerobacter sp. (strain X514), this protein is DNA ligase.